A 488-amino-acid chain; its full sequence is Rhamnulokinase (488 aa).

13–17 contacts ATP; sequence ASSGR. Residues cysteine 68 and cysteine 222 are joined by a disulfide bond. Residues glycine 83 and 236 to 238 each bind substrate; that span reads HDT. The active-site Proton acceptor is the aspartate 237. Threonine 259 contributes to the ATP binding site. A substrate-binding site is contributed by asparagine 296. Position 304 (glutamine 304) interacts with ATP. Cysteine 353 and cysteine 370 are disulfide-bonded. ATP is bound at residue glycine 402. Residues cysteine 413 and cysteine 417 are joined by a disulfide bond.

Belongs to the rhamnulokinase family. The cofactor is Mg(2+).

It catalyses the reaction L-rhamnulose + ATP = L-rhamnulose 1-phosphate + ADP + H(+). It participates in carbohydrate degradation; L-rhamnose degradation; glycerone phosphate from L-rhamnose: step 2/3. Functionally, involved in the catabolism of L-rhamnose (6-deoxy-L-mannose). Catalyzes the transfer of the gamma-phosphate group from ATP to the 1-hydroxyl group of L-rhamnulose to yield L-rhamnulose 1-phosphate. This is Rhamnulokinase from Klebsiella pneumoniae (strain 342).